The primary structure comprises 605 residues: Adenine deaminase (605 aa).

This sequence belongs to the metallo-dependent hydrolases superfamily. Adenine deaminase family. Mn(2+) is required as a cofactor.

The catalysed reaction is adenine + H2O + H(+) = hypoxanthine + NH4(+). This Mesorhizobium japonicum (strain LMG 29417 / CECT 9101 / MAFF 303099) (Mesorhizobium loti (strain MAFF 303099)) protein is Adenine deaminase.